We begin with the raw amino-acid sequence, 604 residues long: Netrin-1 (604 aa).

Positions 1-24 (MMRAVWEALAALAAVACLVGAVRG) are cleaved as a signal peptide. In terms of domain architecture, Laminin N-terminal spans 47-284 (HPRRCIPDFV…AVSDLQVGGR (238 aa)). N-linked (GlcNAc...) asparagine glycosylation is found at Asn95, Asn116, and Asn131. Disulfide bonds link Cys119-Cys152, Cys285-Cys294, Cys287-Cys304, Cys306-Cys315, Cys318-Cys338, Cys341-Cys350, Cys343-Cys368, Cys371-Cys380, Cys383-Cys401, Cys404-Cys416, Cys406-Cys423, Cys425-Cys434, Cys437-Cys451, Cys472-Cys544, and Cys491-Cys601. 3 Laminin EGF-like domains span residues 285 to 340 (CKCN…ECVA), 341 to 403 (CNCN…ACKA), and 404 to 453 (CDCH…PCIK). N-linked (GlcNAc...) asparagine glycosylation occurs at Asn417. An NTR domain is found at 472–601 (CDSYCKASKG…FQQREKKGKC (130 aa)). A Cell attachment site motif is present at residues 530–532 (RGD).

As to quaternary structure, binds to its receptors; DCC, UNC5A, UNC5B, UNC5C and probably UNC5D. Binds to its receptor; DSCAM. Interacts with APP. In the embryo, widely expressed in the developing nervous system and in mesodermal tissues.

It is found in the secreted. The protein resides in the cytoplasm. Its function is as follows. Netrins control guidance of CNS commissural axons and peripheral motor axons. Its association with either DCC or some UNC5 receptors will lead to axon attraction or repulsion, respectively. Binding to UNC5C might cause dissociation of UNC5C from polymerized TUBB3 in microtubules and thereby lead to increased microtubule dynamics and axon repulsion. Involved in dorsal root ganglion axon projection towards the spinal cord. It also serves as a survival factor via its association with its receptors which prevent the initiation of apoptosis. Involved in colorectal tumorigenesis by regulating apoptosis. The chain is Netrin-1 (Ntn1) from Mus musculus (Mouse).